The sequence spans 399 residues: Probable endo-xylogalacturonan hydrolase A (399 aa).

Positions 1–19 (MTFGKAAFLSFSLFGASWA) are cleaved as a signal peptide. 5 PbH1 repeats span residues 177–207 (TTNA…DIGE), 208–229 (STYV…AFKP), 231–251 (CNYL…SVGS), 260–283 (VQNV…KTYP), and 293–314 (VTNV…QIQS). Aspartate 222 serves as the catalytic Proton donor. Residue histidine 245 is part of the active site. Residues asparagine 295 and asparagine 382 are each glycosylated (N-linked (GlcNAc...) asparagine).

This sequence belongs to the glycosyl hydrolase 28 family.

The protein resides in the secreted. Its function is as follows. Pectinolytic enzyme involved in the degradation of xylogalacturonan (xga), a galacturonan backbone heavily substituted with xylose, and which is one important component of the hairy regions of pectin. Activity requires a galacturonic acid backbone substituted with xylose. The protein is Probable endo-xylogalacturonan hydrolase A (xghA) of Emericella nidulans (strain FGSC A4 / ATCC 38163 / CBS 112.46 / NRRL 194 / M139) (Aspergillus nidulans).